Reading from the N-terminus, the 465-residue chain is Probable Xaa-Pro aminopeptidase PEPP (465 aa).

Mn(2+) is bound by residues Asp259, Asp270, Glu395, and Glu435.

It belongs to the peptidase M24B family. Mn(2+) serves as cofactor.

The enzyme catalyses Release of any N-terminal amino acid, including proline, that is linked to proline, even from a dipeptide or tripeptide.. Catalyzes the removal of a penultimate prolyl residue from the N-termini of peptides. The protein is Probable Xaa-Pro aminopeptidase PEPP (PEPP) of Pyricularia oryzae (strain 70-15 / ATCC MYA-4617 / FGSC 8958) (Rice blast fungus).